Consider the following 61-residue polypeptide: uncharacterized protein (61 aa).

This is an uncharacterized protein from Escherichia coli (Bacteriophage T4).